The chain runs to 312 residues: Olfactory receptor 1500 (312 aa).

The Extracellular segment spans residues 1 to 25; sequence MTGNNQTLILEFLLLGLPIPSEYHL. Residue Asn-5 is glycosylated (N-linked (GlcNAc...) asparagine). The helical transmembrane segment at 26–49 threads the bilayer; that stretch reads LFYALFLAMYLTIILGNLLIIVLV. The Cytoplasmic segment spans residues 50–57; the sequence is RLDSHLHM. A helical membrane pass occupies residues 58–79; that stretch reads PMYLFLSNLSFSDLCFSSVTMP. At 80–100 the chain is on the extracellular side; it reads KLLQNMQSQVPSISYTGCLTQ. Cys-97 and Cys-189 are disulfide-bonded. Residues 101–120 traverse the membrane as a helical segment; that stretch reads LYFFMVFGDMESFLLVVMAY. Topologically, residues 121–139 are cytoplasmic; the sequence is DRYVAICFPLRYTTIMSTK. Residues 140–158 traverse the membrane as a helical segment; it reads FCASLVLLLWMLTMTHALL. Topologically, residues 159–196 are extracellular; the sequence is HTLLIARLSFCEKNVILHFFCDISALLKLSCSDIYVNE. The chain crosses the membrane as a helical span at residues 197 to 219; sequence LMIYILGGLIIIIPFLLIVMSYV. The Cytoplasmic segment spans residues 220–236; sequence RIFFSILKFPSIQDIYK. A helical transmembrane segment spans residues 237-260; the sequence is VFSTCGSHLSVVTLFYGTIFGIYL. Residues 261 to 272 are Extracellular-facing; sequence CPSGNNSTVKEI. A helical transmembrane segment spans residues 273–292; that stretch reads AMAMMYTVVTPMLNPFIYSL. At 293–312 the chain is on the cytoplasmic side; sequence RNRDMKRALIRVICTKKISL.

It belongs to the G-protein coupled receptor 1 family. In terms of tissue distribution, olfactory epithelium.

Its subcellular location is the cell membrane. Odorant receptor. The protein is Olfactory receptor 1500 (Olr1500) of Rattus norvegicus (Rat).